Reading from the N-terminus, the 367-residue chain is Secondary metabolism regulator laeA (367 aa).

Positions 1–82 (MFGQQQQQQP…PETYPGHEEN (82 aa)) are disordered. Residues 19–41 (LNHNSRWTPPNESAQPRRSSNAM) are compositionally biased toward polar residues. Composition is skewed to basic and acidic residues over residues 47–56 (TDRDPAEGHP) and 71–82 (KSPETYPGHEEN).

It belongs to the methyltransferase superfamily. LaeA methyltransferase family. As to quaternary structure, component of the heterotrimeric velvet complex composed of laeA, veA and velB; VeA acting as a bridging protein between laeA and velB.

It localises to the nucleus. It carries out the reaction L-methionyl-[protein] + S-adenosyl-L-methionine = S-methyl-L-methionyl-[protein] + S-adenosyl-L-homocysteine. Methyltransferase that performs automethylation. No other methyl-accepting substrate has been identified yet. Component of the velvet transcription factor complex that acts as a global regulator for secondary metabolite gene expression. Controls the expression of the monacolin K gene clusters. Also regulates pigmentation. The sequence is that of Secondary metabolism regulator laeA from Monascus pilosus (Red mold).